The chain runs to 550 residues: Transcription factor 7-like 1-D (550 aa).

Residues 1–61 form an interaction with CTNNB1-A region; the sequence is MPQLNSGXGD…SENHSSDSDS (61 aa). Disordered stretches follow at residues 1–77, 182–212, 390–473, and 488–514; these read MPQL…EKPR, GTPP…PYYP, WSAR…SLTT, and ASKS…SRPI. 2 stretches are compositionally biased toward basic and acidic residues: residues 17 to 32 and 52 to 77; these read ELIR…EKSP and SENH…EKPR. Residues 109 to 311 are interaction with AES and TLE4-A; that stretch reads LGGITCPMVP…SPNLSMKSNV (203 aa). Residues 323–391 constitute a DNA-binding region (HMG box); the sequence is IKKPLNAFML…LHSQLYPSWS (69 aa). Basic and acidic residues predominate over residues 406-415; that stretch reads KQSPEMENYT. Residues 407–550 are interaction with CTBP-B; sequence QSPEMENYTK…PLPLVARSSD (144 aa). A compositionally biased stretch (low complexity) spans 444 to 455; the sequence is SPATPSAALASP.

This sequence belongs to the TCF/LEF family. As to quaternary structure, interacts with csnk1e, ctnnb1-A, ctbp-B, dact1-A and gsk3b. May interact with ase and tle4-A. In terms of processing, phosphorylated. Phosphorylation by csnk1e promotes binding to ctnnb1-A while phosphorylation by gsk3b may reverse this effect.

It localises to the nucleus. In terms of biological role, participates in the Wnt signaling pathway. Binds to DNA and acts as a repressor in the absence of ctnnb1-A and possibly ctnnb1-B, and as an activator in the presence of these proteins. Required early in development for the establishment of the dorsal body axis in response to maternal Wnt signaling. This is Transcription factor 7-like 1-D (tcf7l1-d) from Xenopus laevis (African clawed frog).